A 164-amino-acid chain; its full sequence is Ribosome maturation factor RimM (164 aa).

The 72-residue stretch at 90 to 161 (KGSYFIADLI…TVTIKPLEIW (72 aa)) folds into the PRC barrel domain.

This sequence belongs to the RimM family. In terms of assembly, binds ribosomal protein uS19.

It localises to the cytoplasm. In terms of biological role, an accessory protein needed during the final step in the assembly of 30S ribosomal subunit, possibly for assembly of the head region. Essential for efficient processing of 16S rRNA. May be needed both before and after RbfA during the maturation of 16S rRNA. It has affinity for free ribosomal 30S subunits but not for 70S ribosomes. This Clostridium botulinum (strain ATCC 19397 / Type A) protein is Ribosome maturation factor RimM.